The following is a 276-amino-acid chain: CTD small phosphatase-like protein (276 aa).

A disordered region spans residues 1-25 (MDGPAIITQVTNPKEDEGRLPGAGE). Positions 102–260 (LDYGKKCVVI…LDLIPFFEGL (159 aa)) constitute an FCP1 homology domain. The active-site 4-aspartylphosphate intermediate is the Asp-112. Mg(2+) is bound by residues Asp-112, Asp-114, and Asn-223. Asp-114 functions as the Proton donor in the catalytic mechanism.

Interacts with REST. Monomer. Mg(2+) serves as cofactor. In terms of tissue distribution, expression is restricted to non-neuronal tissues.

It localises to the nucleus. It carries out the reaction O-phospho-L-seryl-[protein] + H2O = L-seryl-[protein] + phosphate. The enzyme catalyses O-phospho-L-threonyl-[protein] + H2O = L-threonyl-[protein] + phosphate. Its function is as follows. Recruited by REST to neuronal genes that contain RE-1 elements, leading to neuronal gene silencing in non-neuronal cells. Preferentially catalyzes the dephosphorylation of 'Ser-5' within the tandem 7 residue repeats in the C-terminal domain (CTD) of the largest RNA polymerase II subunit POLR2A. Negatively regulates RNA polymerase II transcription, possibly by controlling the transition from initiation/capping to processive transcript elongation. This chain is CTD small phosphatase-like protein (CTDSPL), found in Homo sapiens (Human).